A 301-amino-acid chain; its full sequence is Probable alpha-L-glutamate ligase 1 (301 aa).

One can recognise an ATP-grasp domain in the interval 104–287 (LQLLSRKGIG…VTEPIVEYIE (184 aa)). ATP is bound by residues lysine 141, 178-179 (EY), aspartate 187, and 211-213 (RSN). Aspartate 248, glutamate 260, and asparagine 262 together coordinate Mg(2+). Residues aspartate 248, glutamate 260, and asparagine 262 each contribute to the Mn(2+) site.

Belongs to the RimK family. Mg(2+) is required as a cofactor. The cofactor is Mn(2+).

In Shewanella baltica (strain OS155 / ATCC BAA-1091), this protein is Probable alpha-L-glutamate ligase 1.